The chain runs to 393 residues: uncharacterized protein (393 aa).

One can recognise an OBG-type G domain in the interval 2–266 (AMIGLVGKPN…AEKAGIIKRK (265 aa)). Residues 8 to 15 (GKPNVGKS) and 78 to 82 (DVAGL) contribute to the GTP site. The TGS domain occupies 314-390 (DMIVVYPVED…KHNDIIKIVS (77 aa)).

It belongs to the TRAFAC class OBG-HflX-like GTPase superfamily. OBG GTPase family.

This is an uncharacterized protein from Methanocaldococcus jannaschii (strain ATCC 43067 / DSM 2661 / JAL-1 / JCM 10045 / NBRC 100440) (Methanococcus jannaschii).